Here is a 176-residue protein sequence, read N- to C-terminus: Cytochrome b (176 aa).

3 consecutive transmembrane segments (helical) span residues 33–53 (FGSLLGICLVLQISTGLFLAM), 77–98 (WVLRYLHANGASMFFICLYLHV), and 113–133 (WNVGVILLFATMATAFMGYVL). 2 residues coordinate heme b: His-83 and His-97.

It belongs to the cytochrome b family. In terms of assembly, the cytochrome bc1 complex contains 11 subunits: 3 respiratory subunits (MT-CYB, CYC1 and UQCRFS1), 2 core proteins (UQCRC1 and UQCRC2) and 6 low-molecular weight proteins (UQCRH/QCR6, UQCRB/QCR7, UQCRQ/QCR8, UQCR10/QCR9, UQCR11/QCR10 and a cleavage product of UQCRFS1). This cytochrome bc1 complex then forms a dimer. It depends on heme b as a cofactor.

Its subcellular location is the mitochondrion inner membrane. Component of the ubiquinol-cytochrome c reductase complex (complex III or cytochrome b-c1 complex) that is part of the mitochondrial respiratory chain. The b-c1 complex mediates electron transfer from ubiquinol to cytochrome c. Contributes to the generation of a proton gradient across the mitochondrial membrane that is then used for ATP synthesis. The sequence is that of Cytochrome b (MT-CYB) from Corynorhinus rafinesquii (Rafinesque's big-eared bat).